A 125-amino-acid chain; its full sequence is UPF0593 mitochondrial protein C806.05 (125 aa).

It belongs to the UPF0593 family.

The protein localises to the mitochondrion. The protein is UPF0593 mitochondrial protein C806.05 of Schizosaccharomyces pombe (strain 972 / ATCC 24843) (Fission yeast).